The primary structure comprises 331 residues: Pantothenate kinase (331 aa).

109 to 116 is an ATP binding site; the sequence is GSVAVGKS.

It belongs to the prokaryotic pantothenate kinase family.

The protein resides in the cytoplasm. The enzyme catalyses (R)-pantothenate + ATP = (R)-4'-phosphopantothenate + ADP + H(+). The protein operates within cofactor biosynthesis; coenzyme A biosynthesis; CoA from (R)-pantothenate: step 1/5. This Rhizobium rhizogenes (strain K84 / ATCC BAA-868) (Agrobacterium radiobacter) protein is Pantothenate kinase.